A 230-amino-acid chain; its full sequence is 3-beta-hydroxysteroid-Delta(8),Delta(7)-isomerase (230 aa).

At T2 the chain carries N-acetylthreonine. 4 helical membrane passes run 29 to 49 (WHILVGLFSFSGVLIVITWLL), 66 to 86 (LCWFAVCTFIHLVIEGWFSFY), 121 to 141 (MESVTACLWGPLSLWVVIAFL), and 185 to 205 (FWFYFVIMNAIWLVIPGILVF). The EXPERA domain maps to 61–204 (GRRLALCWFA…IWLVIPGILV (144 aa)).

This sequence belongs to the EBP family. As to expression, expressed in liver.

The protein resides in the endoplasmic reticulum membrane. It localises to the nucleus envelope. Its subcellular location is the cytoplasmic vesicle. It carries out the reaction lathosterol = 5alpha-cholest-8-en-3beta-ol. The enzyme catalyses zymosterol = 5alpha-cholesta-7,24-dien-3beta-ol. It catalyses the reaction 5,6alpha-epoxy-5alpha-cholestan-3beta-ol + H2O = 5alpha-cholestane-3beta,5,6beta-triol. The catalysed reaction is 5,6beta-epoxy-5beta-cholestan-3beta-ol + H2O = 5alpha-cholestane-3beta,5,6beta-triol. Its pathway is steroid biosynthesis; cholesterol biosynthesis. With respect to regulation, enzymatic activity is induced by 25-hydroxycholesterol, cholestyramine and lovastatin. Functionally, isomerase that catalyzes the conversion of Delta(8)-sterols to their corresponding Delta(7)-isomers. In terms of biological role, component of the microsomal antiestrogen binding site (AEBS), a multiproteic complex at the ER membrane that consists of an association between EBP and 7-dehydrocholesterol reductase/DHCR7. This complex is responsible for cholesterol-5,6-epoxide hydrolase (ChEH) activity, which consists in the hydration of cholesterol-5,6-epoxides (5,6-EC) into cholestane-3beta,5alpha,6beta-triol (CT). The precise role of each component of this complex has not been described yet. This chain is 3-beta-hydroxysteroid-Delta(8),Delta(7)-isomerase, found in Rattus norvegicus (Rat).